The chain runs to 408 residues: LL-diaminopimelate aminotransferase (408 aa).

Substrate-binding residues include Tyr-15 and Gly-42. Residues Tyr-72, 108–109 (SK), Tyr-132, Asn-187, Tyr-218, and 246–248 (SFS) each bind pyridoxal 5'-phosphate. Lys-109, Tyr-132, and Asn-187 together coordinate substrate. An N6-(pyridoxal phosphate)lysine modification is found at Lys-249. Arg-257 and Asn-292 together coordinate pyridoxal 5'-phosphate. Positions 292 and 388 each coordinate substrate.

It belongs to the class-I pyridoxal-phosphate-dependent aminotransferase family. LL-diaminopimelate aminotransferase subfamily. In terms of assembly, homodimer. The cofactor is pyridoxal 5'-phosphate.

The enzyme catalyses (2S,6S)-2,6-diaminopimelate + 2-oxoglutarate = (S)-2,3,4,5-tetrahydrodipicolinate + L-glutamate + H2O + H(+). The protein operates within amino-acid biosynthesis; L-lysine biosynthesis via DAP pathway; LL-2,6-diaminopimelate from (S)-tetrahydrodipicolinate (aminotransferase route): step 1/1. In terms of biological role, involved in the synthesis of meso-diaminopimelate (m-DAP or DL-DAP), required for both lysine and peptidoglycan biosynthesis. Catalyzes the direct conversion of tetrahydrodipicolinate to LL-diaminopimelate. The protein is LL-diaminopimelate aminotransferase of Synechococcus sp. (strain CC9902).